Reading from the N-terminus, the 141-residue chain is MSSDYRTGREGKEFAYRGHSLDELQEMDVDEVAELLPARQRRSIVRGLGTEQQKLLEKVRSRDKETTADNPIRTHLRDMPILPEFVGVTFSVYNGHSFERVQVEPEMIGHFLGEFHLTRSTVEHGQAGIGATRSSKFVPLK.

It belongs to the universal ribosomal protein uS19 family.

In terms of biological role, protein S19 forms a complex with S13 that binds strongly to the 16S ribosomal RNA. The chain is Small ribosomal subunit protein uS19 from Halorubrum lacusprofundi (strain ATCC 49239 / DSM 5036 / JCM 8891 / ACAM 34).